A 213-amino-acid chain; its full sequence is Kynurenine formamidase (213 aa).

Residue Trp18 coordinates substrate. Zn(2+) contacts are provided by His48, His52, and Asp54. The active-site Proton donor/acceptor is His58. Positions 160 and 172 each coordinate Zn(2+).

This sequence belongs to the Cyclase 1 superfamily. KynB family. In terms of assembly, homodimer. The cofactor is Zn(2+).

The enzyme catalyses N-formyl-L-kynurenine + H2O = L-kynurenine + formate + H(+). Its pathway is amino-acid degradation; L-tryptophan degradation via kynurenine pathway; L-kynurenine from L-tryptophan: step 2/2. Catalyzes the hydrolysis of N-formyl-L-kynurenine to L-kynurenine, the second step in the kynurenine pathway of tryptophan degradation. The chain is Kynurenine formamidase from Burkholderia multivorans (strain ATCC 17616 / 249).